We begin with the raw amino-acid sequence, 164 residues long: Thiol peroxidase (164 aa).

The 147-residue stretch at 16-162 (LQVGEIAHDF…YDAAIEAVKV (147 aa)) folds into the Thioredoxin domain. Cysteine 58 serves as the catalytic Cysteine sulfenic acid (-SOH) intermediate. A disulfide bond links cysteine 58 and cysteine 92.

Belongs to the peroxiredoxin family. Tpx subfamily. Homodimer.

The enzyme catalyses a hydroperoxide + [thioredoxin]-dithiol = an alcohol + [thioredoxin]-disulfide + H2O. Thiol-specific peroxidase that catalyzes the reduction of hydrogen peroxide and organic hydroperoxides to water and alcohols, respectively. Plays a role in cell protection against oxidative stress by detoxifying peroxides. The polypeptide is Thiol peroxidase (Streptococcus parasanguinis).